The following is a 326-amino-acid chain: Glycerol-3-phosphate dehydrogenase [NAD(P)+] (326 aa).

Residues Trp-13, Arg-33, and Lys-107 each contribute to the NADPH site. Sn-glycerol 3-phosphate-binding residues include Lys-107, Gly-135, and Ser-137. An NADPH-binding site is contributed by Ala-139. Sn-glycerol 3-phosphate-binding residues include Lys-190, Asp-243, Ser-253, Arg-254, and Asn-255. Residue Lys-190 is the Proton acceptor of the active site. NADPH is bound at residue Arg-254. Leu-273 and Glu-275 together coordinate NADPH.

Belongs to the NAD-dependent glycerol-3-phosphate dehydrogenase family.

The protein resides in the cytoplasm. It carries out the reaction sn-glycerol 3-phosphate + NAD(+) = dihydroxyacetone phosphate + NADH + H(+). The enzyme catalyses sn-glycerol 3-phosphate + NADP(+) = dihydroxyacetone phosphate + NADPH + H(+). It participates in membrane lipid metabolism; glycerophospholipid metabolism. In terms of biological role, catalyzes the reduction of the glycolytic intermediate dihydroxyacetone phosphate (DHAP) to sn-glycerol 3-phosphate (G3P), the key precursor for phospholipid synthesis. The protein is Glycerol-3-phosphate dehydrogenase [NAD(P)+] of Brucella ovis (strain ATCC 25840 / 63/290 / NCTC 10512).